Consider the following 561-residue polypeptide: Ribulokinase (561 aa).

This sequence belongs to the ribulokinase family.

It carries out the reaction D-ribulose + ATP = D-ribulose 5-phosphate + ADP + H(+). The enzyme catalyses L-ribulose + ATP = L-ribulose 5-phosphate + ADP + H(+). It functions in the pathway carbohydrate degradation; L-arabinose degradation via L-ribulose; D-xylulose 5-phosphate from L-arabinose (bacterial route): step 2/3. The chain is Ribulokinase from Shouchella clausii (strain KSM-K16) (Alkalihalobacillus clausii).